We begin with the raw amino-acid sequence, 365 residues long: Membrane-bound lytic murein transglycosylase C (365 aa).

An N-terminal signal peptide occupies residues 1–19 (MKKYTKYLPLLLIIPFLAA). Residue C20 is the site of N-palmitoyl cysteine attachment. Residue C20 is the site of S-diacylglycerol cysteine attachment.

This sequence belongs to the transglycosylase Slt family.

It localises to the cell outer membrane. It carries out the reaction Exolytic cleavage of the (1-&gt;4)-beta-glycosidic linkage between N-acetylmuramic acid (MurNAc) and N-acetylglucosamine (GlcNAc) residues in peptidoglycan, from either the reducing or the non-reducing ends of the peptidoglycan chains, with concomitant formation of a 1,6-anhydrobond in the MurNAc residue.. In terms of biological role, murein-degrading enzyme. May play a role in recycling of muropeptides during cell elongation and/or cell division. This chain is Membrane-bound lytic murein transglycosylase C, found in Actinobacillus pleuropneumoniae serotype 5b (strain L20).